The sequence spans 330 residues: Putative F-box protein At1g57690 (330 aa).

An F-box domain is found at 25–72 (VDIISSLPDVILQHILFSFQTKYAIRTSVLSKRWRHEADAINKALSQY).

The protein is Putative F-box protein At1g57690 of Arabidopsis thaliana (Mouse-ear cress).